Consider the following 204-residue polypeptide: Large ribosomal subunit protein uL4 (204 aa).

The tract at residues 49–75 (TKGRSEVSGGGKKPWRQKGRGGARAGS) is disordered.

Belongs to the universal ribosomal protein uL4 family. As to quaternary structure, part of the 50S ribosomal subunit.

One of the primary rRNA binding proteins, this protein initially binds near the 5'-end of the 23S rRNA. It is important during the early stages of 50S assembly. It makes multiple contacts with different domains of the 23S rRNA in the assembled 50S subunit and ribosome. Functionally, forms part of the polypeptide exit tunnel. This Campylobacter hominis (strain ATCC BAA-381 / DSM 21671 / CCUG 45161 / LMG 19568 / NCTC 13146 / CH001A) protein is Large ribosomal subunit protein uL4.